We begin with the raw amino-acid sequence, 230 residues long: MASKVIRKFIQNAKLTVFSQEFIRLYLRGANVSKVIIRQTPIVNRVIIYSARPKMISEERKAHLAKLLELKFGLEKPVIEVLPIENPNLDAHVIAERLAMGIERNIRAYRRLAQRYLETIMNAGAIGAEIVIAGRLSGQRGKTWRFKAGNLRKTGTIGQFELDRAFNIAYLKPGVAGIHVTILKPDAEIPDIIEFKSPEEISIEEIEKIDKEIAEKMKKYLETYLLAKQM.

A KH type-2 domain is found at 43-95; it reads VNRVIIYSARPKMISEERKAHLAKLLELKFGLEKPVIEVLPIENPNLDAHVIA.

It belongs to the universal ribosomal protein uS3 family. Part of the 30S ribosomal subunit.

Functionally, binds the lower part of the 30S subunit head. In Nanoarchaeum equitans (strain Kin4-M), this protein is Small ribosomal subunit protein uS3.